The sequence spans 181 residues: GTP cyclohydrolase 1 2 (181 aa).

Belongs to the GTP cyclohydrolase I family. As to quaternary structure, homomer.

The catalysed reaction is GTP + H2O = 7,8-dihydroneopterin 3'-triphosphate + formate + H(+). Its pathway is cofactor biosynthesis; 7,8-dihydroneopterin triphosphate biosynthesis; 7,8-dihydroneopterin triphosphate from GTP: step 1/1. The protein is GTP cyclohydrolase 1 2 (folE2) of Pseudomonas aeruginosa (strain ATCC 15692 / DSM 22644 / CIP 104116 / JCM 14847 / LMG 12228 / 1C / PRS 101 / PAO1).